The chain runs to 204 residues: Protein GrpE (204 aa).

Composition is skewed to basic and acidic residues over residues 1-21 (MEELEKDKIERNEEMSEEVKG) and 36-46 (EEKIETEVEQK). The interval 1 to 46 (MEELEKDKIERNEEMSEEVKGEGPPSELEQSEEVVEEKIETEVEQK) is disordered.

Belongs to the GrpE family. Homodimer.

The protein resides in the cytoplasm. Its function is as follows. Participates actively in the response to hyperosmotic and heat shock by preventing the aggregation of stress-denatured proteins, in association with DnaK and GrpE. It is the nucleotide exchange factor for DnaK and may function as a thermosensor. Unfolded proteins bind initially to DnaJ; upon interaction with the DnaJ-bound protein, DnaK hydrolyzes its bound ATP, resulting in the formation of a stable complex. GrpE releases ADP from DnaK; ATP binding to DnaK triggers the release of the substrate protein, thus completing the reaction cycle. Several rounds of ATP-dependent interactions between DnaJ, DnaK and GrpE are required for fully efficient folding. The polypeptide is Protein GrpE (Caldanaerobacter subterraneus subsp. tengcongensis (strain DSM 15242 / JCM 11007 / NBRC 100824 / MB4) (Thermoanaerobacter tengcongensis)).